The chain runs to 396 residues: Elongation factor Tu (396 aa).

Residues K10–E206 form the tr-type G domain. The segment at G19–T26 is G1. Residue G19–T26 participates in GTP binding. T26 provides a ligand contact to Mg(2+). A G2 region spans residues G60 to N64. Residues D81–G84 form a G3 region. GTP is bound by residues D81–H85 and N136–D139. Positions N136–D139 are G4. Residues S174–T176 form a G5 region.

This sequence belongs to the TRAFAC class translation factor GTPase superfamily. Classic translation factor GTPase family. EF-Tu/EF-1A subfamily. In terms of assembly, monomer.

The protein resides in the cytoplasm. The catalysed reaction is GTP + H2O = GDP + phosphate + H(+). GTP hydrolase that promotes the GTP-dependent binding of aminoacyl-tRNA to the A-site of ribosomes during protein biosynthesis. The polypeptide is Elongation factor Tu (Psychrobacter cryohalolentis (strain ATCC BAA-1226 / DSM 17306 / VKM B-2378 / K5)).